Here is a 638-residue protein sequence, read N- to C-terminus: MAAREELYSKVTPRRDRLQRPGTVKHGSALDVLLSMGFPRARAQKALASTGGRSVQAACDWLFSHVGDPFLDDPLPREYVLYLRPTGPLAQKLSDFWQQSKQICGKNKAHNIFPHITLCQFFMCEDSKVDALGEALQTTVSRWKCKFSAPLPLELYTSSNFIGLFVKEDSAEVLKKFAADFAAEAASKTEVHVEPHKKQLHVTLAYHFQASHLPTLEKLAQNIDVKLGCDWVATIFSRDIRFANHETLQVIYPYSPQNDDELELVPGDFIFMSPMEQTSTSEGWIYGTSLTTGCSGLLPENYITKADECSTWIFHGSYSILNTVSSSSLAFGDGALERRQYEDQGLGETTPLTIICQPMQPLRVNSQPGPQKRCLFVCRHGERMDVVFGKYWLSQCFDAKGRYIRTNLNMPHSLPQRSGGFRDYEKDAPITVFGCMQARLVGEALLESNTVIDHVYCSPSLRCVQTAHNILKGLQQDNHLKIRVEPGLFEWTKWVAGSTLPAWIPPSELAAANLSVDTTYRPHIPVSKLAISESYDTYINRSFQVTKEIISECKSKGNNILIVAHASSLEACTCQLQGLSPQNSKDFVQMVRKIPYLGFCSCEELGETGIWQLTDPPILPLTHGPTGGFNWRETLLQE.

Ser-9 carries the phosphoserine modification. Position 12 is a phosphothreonine (Thr-12). Positions Thr-23–His-65 constitute a UBA domain. Positions Ala-243–Glu-308 constitute an SH3 domain. The tract at residues Gly-369 to Glu-638 is protein tyrosine phosphatase. Residue Arg-379 is part of the active site. His-380 functions as the Tele-phosphohistidine intermediate in the catalytic mechanism. Residue His-565 is part of the active site.

In terms of assembly, homodimer. Interacts with JAK2 (in vitro). Interacts with CBL. Part of a complex containing CBL and activated EGFR. Interacts with ubiquitin and with mono-ubiquitinated proteins. Interacts with ZAP70 (ubiquitinated form). As to expression, detected in splenic T-cells and B-cells, total spleen, skeletal muscle, heart, lung, kidney, thymus, brain and liver (at protein level). Highly expressed in brain. Detected in heart, spleen, lung, liver, kidney and testis.

It localises to the cytoplasm. Its subcellular location is the nucleus. The enzyme catalyses O-phospho-L-tyrosyl-[protein] + H2O = L-tyrosyl-[protein] + phosphate. Interferes with CBL-mediated down-regulation and degradation of receptor-type tyrosine kinases. Promotes accumulation of activated target receptors, such as T-cell receptors and EGFR, on the cell surface. Exhibits tyrosine phosphatase activity toward several substrates including EGFR, FAK, SYK, and ZAP70. Down-regulates proteins that are dually modified by both protein tyrosine phosphorylation and ubiquitination. The sequence is that of Ubiquitin-associated and SH3 domain-containing protein B (Ubash3b) from Mus musculus (Mouse).